Consider the following 175-residue polypeptide: Translation initiation factor IF-3, chloroplastic (175 aa).

The protein belongs to the IF-3 family. In terms of assembly, monomer.

The protein localises to the plastid. The protein resides in the chloroplast. In terms of biological role, IF-3 binds to the 30S ribosomal subunit and shifts the equilibrium between 70S ribosomes and their 50S and 30S subunits in favor of the free subunits, thus enhancing the availability of 30S subunits on which protein synthesis initiation begins. The polypeptide is Translation initiation factor IF-3, chloroplastic (Cyanidioschyzon merolae (strain NIES-3377 / 10D) (Unicellular red alga)).